The following is a 371-amino-acid chain: Anhydro-N-acetylmuramic acid kinase (371 aa).

Residue 10–17 (GTSLDGID) coordinates ATP.

It belongs to the anhydro-N-acetylmuramic acid kinase family.

It catalyses the reaction 1,6-anhydro-N-acetyl-beta-muramate + ATP + H2O = N-acetyl-D-muramate 6-phosphate + ADP + H(+). The protein operates within amino-sugar metabolism; 1,6-anhydro-N-acetylmuramate degradation. It participates in cell wall biogenesis; peptidoglycan recycling. Its function is as follows. Catalyzes the specific phosphorylation of 1,6-anhydro-N-acetylmuramic acid (anhMurNAc) with the simultaneous cleavage of the 1,6-anhydro ring, generating MurNAc-6-P. Is required for the utilization of anhMurNAc either imported from the medium or derived from its own cell wall murein, and thus plays a role in cell wall recycling. This is Anhydro-N-acetylmuramic acid kinase from Chromohalobacter salexigens (strain ATCC BAA-138 / DSM 3043 / CIP 106854 / NCIMB 13768 / 1H11).